The sequence spans 825 residues: Protein SEY1 homolog 2 (825 aa).

A disordered region spans residues methionine 1 to proline 21. Over methionine 1–glutamine 728 the chain is Cytoplasmic. The GB1/RHD3-type G domain occupies glycine 83–proline 305. Glycine 93–serine 100 serves as a coordination point for GTP. The stretch at lysine 373–isoleucine 397 forms a coiled coil. Residues isoleucine 729–leucine 749 traverse the membrane as a helical segment. Over threonine 750–proline 752 the chain is Lumenal. The chain crosses the membrane as a helical span at residues leucine 753–leucine 773. Topologically, residues glycine 774 to lysine 825 are cytoplasmic.

Belongs to the TRAFAC class dynamin-like GTPase superfamily. GB1/RHD3 GTPase family. RHD3 subfamily.

The protein localises to the endoplasmic reticulum membrane. Its function is as follows. Probable GTP-binding protein that may be involved in cell development. This Entamoeba histolytica (strain ATCC 30459 / HM-1:IMSS / ABRM) protein is Protein SEY1 homolog 2.